The chain runs to 178 residues: ATP synthase subunit delta (178 aa).

The protein belongs to the ATPase delta chain family. As to quaternary structure, F-type ATPases have 2 components, F(1) - the catalytic core - and F(0) - the membrane proton channel. F(1) has five subunits: alpha(3), beta(3), gamma(1), delta(1), epsilon(1). F(0) has three main subunits: a(1), b(2) and c(10-14). The alpha and beta chains form an alternating ring which encloses part of the gamma chain. F(1) is attached to F(0) by a central stalk formed by the gamma and epsilon chains, while a peripheral stalk is formed by the delta and b chains.

It localises to the cell inner membrane. Its function is as follows. F(1)F(0) ATP synthase produces ATP from ADP in the presence of a proton or sodium gradient. F-type ATPases consist of two structural domains, F(1) containing the extramembraneous catalytic core and F(0) containing the membrane proton channel, linked together by a central stalk and a peripheral stalk. During catalysis, ATP synthesis in the catalytic domain of F(1) is coupled via a rotary mechanism of the central stalk subunits to proton translocation. In terms of biological role, this protein is part of the stalk that links CF(0) to CF(1). It either transmits conformational changes from CF(0) to CF(1) or is implicated in proton conduction. This chain is ATP synthase subunit delta, found in Cellvibrio japonicus (strain Ueda107) (Pseudomonas fluorescens subsp. cellulosa).